Reading from the N-terminus, the 201-residue chain is Adenylyl-sulfate kinase (201 aa).

35-42 (GLSGSGKS) provides a ligand contact to ATP. Ser-109 (phosphoserine intermediate) is an active-site residue.

It belongs to the APS kinase family.

It carries out the reaction adenosine 5'-phosphosulfate + ATP = 3'-phosphoadenylyl sulfate + ADP + H(+). It functions in the pathway sulfur metabolism; hydrogen sulfide biosynthesis; sulfite from sulfate: step 2/3. In terms of biological role, catalyzes the synthesis of activated sulfate. The sequence is that of Adenylyl-sulfate kinase from Shigella flexneri.